We begin with the raw amino-acid sequence, 288 residues long: Elongation factor Ts (288 aa).

Residues 82–85 (TDFV) are involved in Mg(2+) ion dislocation from EF-Tu.

This sequence belongs to the EF-Ts family.

It localises to the cytoplasm. In terms of biological role, associates with the EF-Tu.GDP complex and induces the exchange of GDP to GTP. It remains bound to the aminoacyl-tRNA.EF-Tu.GTP complex up to the GTP hydrolysis stage on the ribosome. The chain is Elongation factor Ts from Chlorobium chlorochromatii (strain CaD3).